Reading from the N-terminus, the 178-residue chain is NAD(P)H-quinone oxidoreductase subunit 6, chloroplastic (178 aa).

A run of 5 helical transmembrane segments spans residues 10-30 (FILV…VLFT), 32-52 (PIYS…FYIL), 61-81 (AQLL…VMFM), 94-114 (LWTI…FSLI), and 154-174 (FFLP…GAIA).

Belongs to the complex I subunit 6 family. In terms of assembly, NDH is composed of at least 16 different subunits, 5 of which are encoded in the nucleus.

The protein localises to the plastid. It is found in the chloroplast thylakoid membrane. It carries out the reaction a plastoquinone + NADH + (n+1) H(+)(in) = a plastoquinol + NAD(+) + n H(+)(out). The catalysed reaction is a plastoquinone + NADPH + (n+1) H(+)(in) = a plastoquinol + NADP(+) + n H(+)(out). Functionally, NDH shuttles electrons from NAD(P)H:plastoquinone, via FMN and iron-sulfur (Fe-S) centers, to quinones in the photosynthetic chain and possibly in a chloroplast respiratory chain. The immediate electron acceptor for the enzyme in this species is believed to be plastoquinone. Couples the redox reaction to proton translocation, and thus conserves the redox energy in a proton gradient. This Citrus sinensis (Sweet orange) protein is NAD(P)H-quinone oxidoreductase subunit 6, chloroplastic (ndhG).